Consider the following 301-residue polypeptide: Bifunctional protein FolD (301 aa).

NADP(+) contacts are provided by residues 164-166 (GRS), S191, and I232.

It belongs to the tetrahydrofolate dehydrogenase/cyclohydrolase family. Homodimer.

It carries out the reaction (6R)-5,10-methylene-5,6,7,8-tetrahydrofolate + NADP(+) = (6R)-5,10-methenyltetrahydrofolate + NADPH. The enzyme catalyses (6R)-5,10-methenyltetrahydrofolate + H2O = (6R)-10-formyltetrahydrofolate + H(+). It participates in one-carbon metabolism; tetrahydrofolate interconversion. Catalyzes the oxidation of 5,10-methylenetetrahydrofolate to 5,10-methenyltetrahydrofolate and then the hydrolysis of 5,10-methenyltetrahydrofolate to 10-formyltetrahydrofolate. The polypeptide is Bifunctional protein FolD (Borrelia garinii subsp. bavariensis (strain ATCC BAA-2496 / DSM 23469 / PBi) (Borreliella bavariensis)).